The following is a 608-amino-acid chain: Putative multicopper oxidase GMC1 (608 aa).

3 consecutive Plastocyanin-like domains span residues 51-163 (INGY…LIVE), 243-374 (LING…ELYR), and 421-548 (ERTF…FEVP). 4 residues coordinate Cu cation: His-100, His-102, His-145, and His-147. Cu cation contacts are provided by His-452, His-455, His-457, His-530, Cys-531, His-532, and His-536.

It belongs to the multicopper oxidase family. It depends on Cu cation as a cofactor.

Could be an iron transport multicopper oxidase, which is required for Fe(2+) high affinity uptake. May be required to oxidize Fe(2+) and release it from the transporter. Essential component of copper-dependent iron transport. Involved in meiotic prophase and synaptonemal complex (SC) assembly. The polypeptide is Putative multicopper oxidase GMC1 (GMC1) (Saccharomyces cerevisiae (strain ATCC 204508 / S288c) (Baker's yeast)).